The chain runs to 181 residues: UPF0200 protein Ta0179 (181 aa).

6-13 serves as a coordination point for ATP; that stretch reads GMPGAGKD.

Belongs to the UPF0200 family.

The sequence is that of UPF0200 protein Ta0179 from Thermoplasma acidophilum (strain ATCC 25905 / DSM 1728 / JCM 9062 / NBRC 15155 / AMRC-C165).